Reading from the N-terminus, the 533-residue chain is Beta-1,2-xylosyltransferase RCN11 (533 aa).

At 1–23 (MMPVRTYHHHHHHNNSNNHRLRR) the chain is on the cytoplasmic side. Residues 24–44 (IIPRVLLAVFAIYAVSFAAYL) traverse the membrane as a helical; Signal-anchor for type II membrane protein segment. Topologically, residues 45-533 (LRHQSPHPHP…LSNILKGFGC (489 aa)) are lumenal. Positions 51–78 (HPHPHPAADPERDAVDAAGGGGGGGAVD) are disordered. Positions 56–65 (PAADPERDAV) are enriched in basic and acidic residues. N-linked (GlcNAc...) asparagine glycosylation is found at Asn-307 and Asn-313.

It belongs to the glycosyltransferase 61 family. Expressed at the base of the crown roots and in the basal region of the shoot, which contains the shoot and axillary meristems.

Its subcellular location is the golgi apparatus membrane. The protein operates within glycan metabolism. In terms of biological role, glycosyltransferase involved in the xylosylation of N-glycans. Possesses beta-1,2-xylosyltransferase activity, transferring xylose from UDP-xylose to the core beta-linked mannose of N-glycans. Beta-1,2-linked xylose residues on N-glycans are critical for seed germination and plant development and growth under conditions of abiotic stress. The protein is Beta-1,2-xylosyltransferase RCN11 of Oryza sativa subsp. japonica (Rice).